The primary structure comprises 957 residues: Glycine dehydrogenase (decarboxylating) (957 aa).

At K708 the chain carries N6-(pyridoxal phosphate)lysine.

This sequence belongs to the GcvP family. In terms of assembly, the glycine cleavage system is composed of four proteins: P, T, L and H. The cofactor is pyridoxal 5'-phosphate.

The enzyme catalyses N(6)-[(R)-lipoyl]-L-lysyl-[glycine-cleavage complex H protein] + glycine + H(+) = N(6)-[(R)-S(8)-aminomethyldihydrolipoyl]-L-lysyl-[glycine-cleavage complex H protein] + CO2. Functionally, the glycine cleavage system catalyzes the degradation of glycine. The P protein binds the alpha-amino group of glycine through its pyridoxal phosphate cofactor; CO(2) is released and the remaining methylamine moiety is then transferred to the lipoamide cofactor of the H protein. This Salmonella agona (strain SL483) protein is Glycine dehydrogenase (decarboxylating).